The following is a 343-amino-acid chain: UPF0157 protein YqkA (343 aa).

An N-acetyltransferase domain is found at Lys-8–Ser-144. The interval Val-135–Leu-343 is UPF0157.

It in the C-terminal section; belongs to the UPF0157 (GrpB) family.

The chain is UPF0157 protein YqkA (yqkA) from Bacillus subtilis (strain 168).